A 77-amino-acid polypeptide reads, in one-letter code: RNA-binding protein Hfq (77 aa).

Residues 9–69 form the Sm domain; the sequence is DQFLNQLRKE…ISTFAPQKNV (61 aa).

This sequence belongs to the Hfq family. In terms of assembly, homohexamer.

Functionally, RNA chaperone that binds small regulatory RNA (sRNAs) and mRNAs to facilitate mRNA translational regulation in response to envelope stress, environmental stress and changes in metabolite concentrations. Also binds with high specificity to tRNAs. The polypeptide is RNA-binding protein Hfq (Shouchella clausii (strain KSM-K16) (Alkalihalobacillus clausii)).